We begin with the raw amino-acid sequence, 339 residues long: Phenylalanine--tRNA ligase alpha subunit (339 aa).

Mg(2+) is bound at residue Glu250.

Belongs to the class-II aminoacyl-tRNA synthetase family. Phe-tRNA synthetase alpha subunit type 1 subfamily. In terms of assembly, tetramer of two alpha and two beta subunits. Requires Mg(2+) as cofactor.

It localises to the cytoplasm. The enzyme catalyses tRNA(Phe) + L-phenylalanine + ATP = L-phenylalanyl-tRNA(Phe) + AMP + diphosphate + H(+). This is Phenylalanine--tRNA ligase alpha subunit from Christiangramia forsetii (strain DSM 17595 / CGMCC 1.15422 / KT0803) (Gramella forsetii).